We begin with the raw amino-acid sequence, 1344 residues long: DEAD-box ATP-dependent RNA helicase FANCM (1344 aa).

A disordered region spans residues 39–61 (SSSHFTPLANPPITANLTKPPAK). The 169-residue stretch at 124–292 (ITKTALFSNT…GIIDNLQIST (169 aa)) folds into the Helicase ATP-binding domain. Residue 137 to 144 (LPTGLGKT) participates in ATP binding. The short motif at 240-243 (DEAH) is the DEAH box element. The Helicase C-terminal domain occupies 450–621 (KLSKMLEILV…SFNFHPSPRM (172 aa)). Disordered stretches follow at residues 765 to 790 (VNTSQRKAKQVESPTSTLETTEKDYE), 1110 to 1148 (EVSSGAEMSADENEDVTGDSFEDSFIDDGTMPTANTQAE), 1183 to 1218 (YSAGPLTRINESRSDSDKSLSSLRTPKTTNSESNQD), and 1307 to 1344 (KQRSEAKEKEDATVIPNPGMQRSDGMEKDAPSFDLGLW). Residues 1118–1135 (SADENEDVTGDSFEDSFI) show a composition bias toward acidic residues. Residues 1207–1218 (TPKTTNSESNQD) show a composition bias toward polar residues. A compositionally biased stretch (basic and acidic residues) spans 1308 to 1318 (QRSEAKEKEDA).

It belongs to the DEAD box helicase family. DEAH subfamily. FANCM sub-subfamily.

The protein localises to the nucleus. It catalyses the reaction ATP + H2O = ADP + phosphate + H(+). Involved in ordered homologous recombination (HR) events in somatic and meiotic cells. Involved in the suppression of spontaneous HR events in somatic cells. Has an opposite function to the DNA binding cofactor MHF1 which promotes spontaneous HR. Functions in replicative repair independently of MHF1 and in a parallel pathway to the endonuclease MUS81. Acts in the same pathway as the two DNA-binding cofactors MHF1 and MHF2 to restrain class II meiotic crossover (CO), and acts exclusively with MHF1 and MHF2 during meiosis to repair DNA interstrand cross-links (ICLs). This common pathway is in parallel to the pathway that involves the RECQ4A helicase. Seems to be involved in the stabilization of recombination intermediates. Involved in DNA double-strand break (DSB) repair during meiosis. Required for synthesis-dependent strand annealing (SDSA) and to a lesser extent for single-strand annealing (SSA). May process meiotic DSB repair intermediates, possibly D-loops, driving them toward noncrossover (NCO) resolution. This Arabidopsis thaliana (Mouse-ear cress) protein is DEAD-box ATP-dependent RNA helicase FANCM.